The chain runs to 74 residues: Putative defensin-like protein 128 (74 aa).

The N-terminal stretch at 1–24 is a signal peptide; it reads MSKLTNVVIFIVFFLGMMAKETQG. 4 disulfide bridges follow: Cys28/Cys72, Cys37/Cys56, Cys42/Cys66, and Cys46/Cys68.

This sequence belongs to the DEFL family.

The protein resides in the secreted. This chain is Putative defensin-like protein 128 (LCR8), found in Arabidopsis thaliana (Mouse-ear cress).